The sequence spans 368 residues: MGSTGNAEIQIIPTHSSDEEANLFAMQLASAAVLPMALKAAIELDVLEIMAKSVPPSGYISPAEIAAQLPTTNPEAPVMLDRVLRLLASYSVVTYTLRELPSGKVERLYGLAPVCKFLTKNEDGVSLAPFLLTATDKVLLEPWFYLKDAILEGGIPFNKAYGMNEFDYHGTDHRFNKVFNKGMSSNSTITMKKILEMYNGFEGLTTIVDVGGGTGAVASMIVAKYPSINAINFDLPHVIQDAPAFSGVEHLGGDMFDGVPKGDAIFIKWICHDWSDEHCLKLLKNCYAALPDHGKVIVAEYILPPSPDPSIATKVVIHTDALMLAYNPGGKERTEKEFQALAMASGFRGFKVASCAFNTYVMEFLKTA.

A propeptide spanning residues M1–G2 is cleaved from the precursor. S-adenosyl-L-methionine contacts are provided by residues S187, G211 to G212, D234, D254 to M255, and K268. H272 (proton acceptor) is an active-site residue.

This sequence belongs to the class I-like SAM-binding methyltransferase superfamily. Cation-independent O-methyltransferase family. COMT subfamily. As to quaternary structure, homodimer. In terms of tissue distribution, expressed in petals, style and stamens, but not in stigma, sepals, leaves or stem tissues.

It catalyses the reaction (E)-isoeugenol + S-adenosyl-L-methionine = (E)-isomethyleugenol + S-adenosyl-L-homocysteine + H(+). Functionally, catalyzes the methylation of the para-4-hydroxyl of both eugenol and (iso)eugenol to methyleugenol and isomethyleugenol, respectively. The resulting products are part of a complex mixture of low-molecular-weight volatile compounds emitted by the flowers to attract pollinators. This is (Iso)eugenol O-methyltransferase (IEMT1) from Clarkia breweri (Fairy fans).